We begin with the raw amino-acid sequence, 162 residues long: Crossover junction endodeoxyribonuclease RuvC (162 aa).

Residues aspartate 8, glutamate 69, and histidine 141 contribute to the active site. Mg(2+) is bound by residues aspartate 8, glutamate 69, and histidine 141.

The protein belongs to the RuvC family. In terms of assembly, homodimer which binds Holliday junction (HJ) DNA. The HJ becomes 2-fold symmetrical on binding to RuvC with unstacked arms; it has a different conformation from HJ DNA in complex with RuvA. In the full resolvosome a probable DNA-RuvA(4)-RuvB(12)-RuvC(2) complex forms which resolves the HJ. Mg(2+) is required as a cofactor.

It localises to the cytoplasm. It catalyses the reaction Endonucleolytic cleavage at a junction such as a reciprocal single-stranded crossover between two homologous DNA duplexes (Holliday junction).. Its function is as follows. The RuvA-RuvB-RuvC complex processes Holliday junction (HJ) DNA during genetic recombination and DNA repair. Endonuclease that resolves HJ intermediates. Cleaves cruciform DNA by making single-stranded nicks across the HJ at symmetrical positions within the homologous arms, yielding a 5'-phosphate and a 3'-hydroxyl group; requires a central core of homology in the junction. The consensus cleavage sequence is 5'-(A/T)TT(C/G)-3'. Cleavage occurs on the 3'-side of the TT dinucleotide at the point of strand exchange. HJ branch migration catalyzed by RuvA-RuvB allows RuvC to scan DNA until it finds its consensus sequence, where it cleaves and resolves the cruciform DNA. In Wolbachia sp. subsp. Drosophila simulans (strain wRi), this protein is Crossover junction endodeoxyribonuclease RuvC.